Here is a 253-residue protein sequence, read N- to C-terminus: 3-deoxy-manno-octulosonate cytidylyltransferase (253 aa).

Belongs to the KdsB family.

It localises to the cytoplasm. The catalysed reaction is 3-deoxy-alpha-D-manno-oct-2-ulosonate + CTP = CMP-3-deoxy-beta-D-manno-octulosonate + diphosphate. It participates in nucleotide-sugar biosynthesis; CMP-3-deoxy-D-manno-octulosonate biosynthesis; CMP-3-deoxy-D-manno-octulosonate from 3-deoxy-D-manno-octulosonate and CTP: step 1/1. Its pathway is bacterial outer membrane biogenesis; lipopolysaccharide biosynthesis. Functionally, activates KDO (a required 8-carbon sugar) for incorporation into bacterial lipopolysaccharide in Gram-negative bacteria. In Neisseria meningitidis serogroup C / serotype 2a (strain ATCC 700532 / DSM 15464 / FAM18), this protein is 3-deoxy-manno-octulosonate cytidylyltransferase.